The sequence spans 334 residues: GTPase Obg (334 aa).

The Obg domain occupies 1-159; sequence MRFVDEVVIK…KEVRLELNLL (159 aa). An OBG-type G domain is found at 160-331; that stretch reads ADVALLGLPN…LAKKLNEFLQ (172 aa). Residues 166–173, 191–195, 212–215, 282–285, and 312–314 contribute to the GTP site; these read GLPNAGKS, FTTMY, DIPG, NKID, and SAA. Positions 173 and 193 each coordinate Mg(2+).

It belongs to the TRAFAC class OBG-HflX-like GTPase superfamily. OBG GTPase family. In terms of assembly, monomer. Mg(2+) serves as cofactor.

Its subcellular location is the cytoplasm. In terms of biological role, an essential GTPase which binds GTP, GDP and possibly (p)ppGpp with moderate affinity, with high nucleotide exchange rates and a fairly low GTP hydrolysis rate. Plays a role in control of the cell cycle, stress response, ribosome biogenesis and in those bacteria that undergo differentiation, in morphogenesis control. The polypeptide is GTPase Obg (Francisella tularensis subsp. tularensis (strain WY96-3418)).